The primary structure comprises 212 residues: Cytidylate kinase (212 aa).

An ATP-binding site is contributed by 7-15 (GPAASGKGT).

This sequence belongs to the cytidylate kinase family. Type 1 subfamily.

Its subcellular location is the cytoplasm. It carries out the reaction CMP + ATP = CDP + ADP. The enzyme catalyses dCMP + ATP = dCDP + ADP. The polypeptide is Cytidylate kinase (Rhodopseudomonas palustris (strain ATCC BAA-98 / CGA009)).